We begin with the raw amino-acid sequence, 492 residues long: Serine/threonine protein phosphatase 2A 57 kDa regulatory subunit B' theta isoform (492 aa).

The segment at 1-63 is disordered; that stretch reads MWKQILSKLP…GFKEGNLKGN (63 aa). Residues 16 to 39 are compositionally biased toward low complexity; the sequence is KNHSSSSSSTSKSSDNGASKSGNS. A Microbody targeting signal motif is present at residues 490-492; that stretch reads SSL.

It belongs to the phosphatase 2A regulatory subunit B56 family. In terms of assembly, PP2A consists of a common heteromeric enzyme, composed of a catalytic subunit (subunits C), a constant regulatory subunit (subunit A), and a variety of regulatory subunits such as subunits B (the R2/B/PR55/B55, R3/B''/PR72/PR130/PR59 and R5/B'/B56 families). Interacts with BZR1. Interacts with PP2A2, PP2A5 and PP2AA2. As to expression, highly expressed in dry seeds. Expressed in roots, cotyledons, rosette leaves and flowers.

The protein localises to the cytoplasm. The protein resides in the cytosol. It is found in the peroxisome. In terms of biological role, the B regulatory subunit may modulate substrate selectivity and catalytic activity, and may also direct the localization of the catalytic enzyme to a particular subcellular compartment. Associates with the serine/threonine-protein phosphatase PP2A catalytic subunit C and regulatory subunit A to positively regulates beta-oxidation of fatty acids and protoauxins in peroxisomes by dephosphorylating peroxisomal beta-oxidation-related proteins. Required for the formation of the PP2A holoenzyme that negatively regulates brassinosteroid signaling by dephosphorylating and inactivating BRI1 in the cytoplasm. This chain is Serine/threonine protein phosphatase 2A 57 kDa regulatory subunit B' theta isoform (B'THETA), found in Arabidopsis thaliana (Mouse-ear cress).